The following is a 157-amino-acid chain: Ribosomal RNA large subunit methyltransferase H (157 aa).

S-adenosyl-L-methionine-binding positions include Leu-73, Gly-104, and Leu-123–Leu-128.

Belongs to the RNA methyltransferase RlmH family. Homodimer.

It is found in the cytoplasm. The enzyme catalyses pseudouridine(1915) in 23S rRNA + S-adenosyl-L-methionine = N(3)-methylpseudouridine(1915) in 23S rRNA + S-adenosyl-L-homocysteine + H(+). Specifically methylates the pseudouridine at position 1915 (m3Psi1915) in 23S rRNA. This Xylella fastidiosa (strain M12) protein is Ribosomal RNA large subunit methyltransferase H.